A 325-amino-acid polypeptide reads, in one-letter code: Myo-inositol dehydrogenase Hyg17 (325 aa).

The protein belongs to the Gfo/Idh/MocA family.

The enzyme catalyses myo-inositol + NAD(+) = myo-inosose-5 + NADH + H(+). The protein operates within antibiotic biosynthesis. Its function is as follows. Dehydrogenase involved in the biosynthesis of the aminocyclitol moiety of hygromycin A, a broad-spectrum antibiotic. Catalyzes the NAD(+)-dependent oxidation of myo-inositol to myo-inosose-5 (neo-inosose). Shows reduced activity with scyllo-inositol, minimal activity with L-chiro-inositol and no activity with D-glucose, D-chiro-inositol, epi-inositol, muco-inositol and allo-inositol. Is specific for NAD(+) and cannot use NADP(+). This Streptomyces leeuwenhoekii protein is Myo-inositol dehydrogenase Hyg17.